Reading from the N-terminus, the 350-residue chain is uncharacterized protein (350 aa).

Its function is as follows. May play a role in septum formation. This is an uncharacterized protein from Mycobacterium tuberculosis (strain CDC 1551 / Oshkosh).